Reading from the N-terminus, the 470-residue chain is Aspartate-semialdehyde dehydrogenase 1 (470 aa).

Positions 145 and 171 each coordinate NAD(+). Asp243 is an active-site residue. Gly245 is an NAD(+) binding site. Residue Cys277 is part of the active site. An NAD(+)-binding site is contributed by Glu371.

It belongs to the aldehyde dehydrogenase family.

The enzyme catalyses L-aspartate 4-semialdehyde + NAD(+) + H2O = L-aspartate + NADH + 2 H(+). In terms of biological role, dehydrogenase involved in the degradation of canavanine, the delta-oxa-analog of arginine, allowing growth on canavanine as sole nitrogen and carbon source. Probably catalyzes the NAD(+)-dependent oxidation of L-aspartate-semialdehyde to L-aspartate. This Pseudomonas canavaninivorans protein is Aspartate-semialdehyde dehydrogenase 1.